The sequence spans 922 residues: MERGLPLLCATLALALALAGAFRSDKCGGTIKIENPGYLTSPGYPHSYHPSEKCEWLIQAPEPYQRIMINFNPHFDLEDRDCKYDYVEVIDGENEGGRLWGKFCGKIAPSPVVSSGPFLFIKFVSDYETHGAGFSIRYEIFKRGPECSQNYTAPTGVIKSPGFPEKYPNSLECTYIIFAPKMSEIILEFESFDLEQDSNPPGGVFCRYDRLEIWDGFPEVGPHIGRYCGQKTPGRIRSSSGILSMVFYTDSAIAKEGFSANYSVLQSSISEDFKCMEALGMESGEIHSDQITASSQYGTNWSVERSRLNYPENGWTPGEDSYREWIQVDLGLLRFVTAVGTQGAISKETKKKYYVKTYRVDISSNGEDWITLKEGNKAIIFQGNTNPTDVVFGVFPKPLITRFVRIKPASWETGISMRFEVYGCKITDYPCSGMLGMVSGLISDSQITASNQGDRNWMPENIRLVTSRTGWALPPSPHPYINEWLQVDLGDEKIVRGVIIQGGKHRENKVFMRKFKIAYSNNGSDWKMIMDDSKRKAKSFEGNNNYDTPELRAFTPLSTRFIRIYPERATHSGLGLRMELLGCEVEVPTAGPTTPNGNPVDECDDDQANCHSGTGDDFQLTGGTTVLATEKPTIIDSTIQSEFPTYGFNCEFGWGSHKTFCHWEHDSHAQLRWRVLTSKTGPIQDHTGDGNFIYSQADENQKGKVARLVSPVVYSQSSAHCMTFWYHMSGSHVGTLRVKLHYQKPEEYDQLVWMVVGHQGDHWKEGRVLLHKSLKLYQVIFEGEIGKGNLGGIAVDDISINNHIPQEDCAKPTDLDKKNTEIKIDETGSTPGYEEGKGDKNISRKPGNVLKTLDPILITIIAMSALGVLLGAVCGVVLYCACWHNGMSERNLSALENYNFELVDGVKLKKDKLNPQSNYSEA.

The N-terminal stretch at 1-21 (MERGLPLLCATLALALALAGA) is a signal peptide. The Extracellular portion of the chain corresponds to 22-855 (FRSDKCGGTI…PGNVLKTLDP (834 aa)). 3 disulfide bridges follow: Cys27-Cys54, Cys82-Cys104, and Cys147-Cys173. CUB domains lie at 27 to 141 (CGGT…YEIF) and 147 to 265 (CSQN…YSVL). An N-linked (GlcNAc...) asparagine glycan is attached at Asn150. Ca(2+) is bound by residues Glu195, Asp209, and Asp250. An intrachain disulfide couples Cys206 to Cys228. 3 N-linked (GlcNAc...) asparagine glycosylation sites follow: Asn261, Asn300, and Asn522. Disulfide bonds link Cys275–Cys424 and Cys431–Cys583. 2 F5/8 type C domains span residues 275–424 (CMEA…VYGC) and 431–583 (CSGM…LLGC). Ser612 is a glycosylation site (O-linked (Xyl...) (chondroitin sulfate) serine; alternate). Ser612 is a glycosylation site (O-linked (Xyl...) (heparan sulfate) serine; alternate). The MAM domain occupies 645–811 (TYGFNCEFGW…NHIPQEDCAK (167 aa)). Ser829 carries O-linked (Xyl...) (chondroitin sulfate) serine glycosylation. Asn841 carries an N-linked (GlcNAc...) asparagine glycan. The helical transmembrane segment at 856–880 (ILITIIAMSALGVLLGAVCGVVLYC) threads the bilayer. The Cytoplasmic portion of the chain corresponds to 881–922 (ACWHNGMSERNLSALENYNFELVDGVKLKKDKLNPQSNYSEA). Ser893 is subject to Phosphoserine.

Belongs to the neuropilin family. In terms of assembly, homodimer, and heterodimer with NRP2. Binds PLXNB1. Interacts with FER. Interacts with VEGFA. Interacts with ABCB8/MITOSUR in mitochondria. As to expression, found in the embryonic nervous system. Expressed in dorsal root ganglia.

It localises to the mitochondrion membrane. The protein localises to the cell membrane. It is found in the cytoplasm. Cell-surface receptor involved in the development of the cardiovascular system, in angiogenesis, in the formation of certain neuronal circuits and in organogenesis outside the nervous system. Mediates the chemorepulsant activity of semaphorins. Recognizes a C-end rule (CendR) motif R/KXXR/K on its ligands which causes cellular internalization and vascular leakage. It binds to semaphorin 3A, the PLGF-2 isoform of PGF, the VEGF165 isoform of VEGFA and VEGFB. Coexpression with KDR results in increased VEGF165 binding to KDR as well as increased chemotaxis. Regulates VEGF-induced angiogenesis. Binding to VEGFA initiates a signaling pathway needed for motor neuron axon guidance and cell body migration, including for the caudal migration of facial motor neurons from rhombomere 4 to rhombomere 6 during embryonic development. Regulates mitochondrial iron transport via interaction with ABCB8/MITOSUR. The chain is Neuropilin-1 (Nrp1) from Rattus norvegicus (Rat).